The following is a 514-amino-acid chain: 1,25-dihydroxyvitamin D(3) 24-hydroxylase, mitochondrial (514 aa).

A mitochondrion-targeting transit peptide spans 1–35 (MSCPIDKRRPLIAFLRRLRDLGQPPRSVTSKAHVK). Cys462 lines the heme pocket.

It belongs to the cytochrome P450 family. It depends on heme as a cofactor.

Its subcellular location is the mitochondrion. It catalyses the reaction calcitriol + 2 reduced [adrenodoxin] + O2 + 2 H(+) = calcitetrol + 2 oxidized [adrenodoxin] + H2O. The catalysed reaction is calcitetrol + 2 reduced [adrenodoxin] + O2 + 2 H(+) = (1S)-1,25-dihydroxy-24-oxocalciol + 2 oxidized [adrenodoxin] + 2 H2O. The enzyme catalyses (1S)-1,25-dihydroxy-24-oxocalciol + 2 reduced [adrenodoxin] + O2 + 2 H(+) = (1S)-1,23,25-trihydroxy-24-oxocalciol + 2 oxidized [adrenodoxin] + H2O. It carries out the reaction (1S)-1,23-dihydroxy-24,25,26,27-tetranorcalciol + 2 reduced [adrenodoxin] + O2 + 2 H(+) = (1S)-1-hydroxy-23-oxo-24,25,26,27-tetranorcalciol + 2 oxidized [adrenodoxin] + 2 H2O. It catalyses the reaction (1S)-1-hydroxy-23-oxo-24,25,26,27-tetranorcalciol + 2 reduced [adrenodoxin] + O2 + H(+) = calcitroate + 2 oxidized [adrenodoxin] + H2O. The catalysed reaction is calcidiol + 2 reduced [adrenodoxin] + O2 + 2 H(+) = secalciferol + 2 oxidized [adrenodoxin] + H2O. The enzyme catalyses secalciferol + 2 reduced [adrenodoxin] + O2 + 2 H(+) = 25-hydroxy-24-oxocalciol + 2 oxidized [adrenodoxin] + 2 H2O. It carries out the reaction 25-hydroxy-24-oxocalciol + 2 reduced [adrenodoxin] + O2 + 2 H(+) = 23S,25-dihydroxy-24-oxocholecalciferol + 2 oxidized [adrenodoxin] + H2O. It catalyses the reaction 20S,23-dihydroxycholecalciferol + 2 reduced [adrenodoxin] + O2 + 2 H(+) = 20S,23,25-trihydroxycholecalciferol + 2 oxidized [adrenodoxin] + H2O. The catalysed reaction is 20S,23-dihydroxycholecalciferol + 2 reduced [adrenodoxin] + O2 + 2 H(+) = 20S,23,24-trihydroxycholecalciferol + 2 oxidized [adrenodoxin] + H2O. The enzyme catalyses 20S-hydroxycholecalciferol + 2 reduced [adrenodoxin] + O2 + 2 H(+) = 20S,25-dihydroxycholecalciferol + 2 oxidized [adrenodoxin] + H2O. It carries out the reaction 20S-hydroxycholecalciferol + 2 reduced [adrenodoxin] + O2 + 2 H(+) = 20S,24S-dihydroxycholecalciferol + 2 oxidized [adrenodoxin] + H2O. It catalyses the reaction 20S-hydroxycholecalciferol + 2 reduced [adrenodoxin] + O2 + 2 H(+) = 20S,24R-dihydroxycholecalciferol + 2 oxidized [adrenodoxin] + H2O. Its function is as follows. A cytochrome P450 monooxygenase with a key role in vitamin D catabolism and calcium homeostasis. Via C24-oxidation pathway, catalyzes the inactivation of both the vitamin D precursor calcidiol (25-hydroxyvitamin D(3)) and the active hormone calcitriol (1-alpha,25-dihydroxyvitamin D(3)). With initial hydroxylation at C-24 (via C24-oxidation pathway), performs a sequential 6-step oxidation of calcitriol leading to the formation of the biliary metabolite calcitroic acid. Hydroxylates at C-24 or C-25 other vitamin D active metabolites, such as CYP11A1-derived secosteroids 20S-hydroxycholecalciferol and 20S,23-dihydroxycholecalciferol. Mechanistically, uses molecular oxygen inserting one oxygen atom into a substrate, and reducing the second into a water molecule, with two electrons provided by NADPH via FDXR/adrenodoxin reductase and FDX1/adrenodoxin. The sequence is that of 1,25-dihydroxyvitamin D(3) 24-hydroxylase, mitochondrial from Mus musculus (Mouse).